The sequence spans 77 residues: Large ribosomal subunit protein bL28 (77 aa).

Residues 1–20 are disordered; sequence MSRVCQVTGKGPVTGNNISH.

It belongs to the bacterial ribosomal protein bL28 family.

The chain is Large ribosomal subunit protein bL28 from Pseudomonas syringae pv. tomato (strain ATCC BAA-871 / DC3000).